The following is a 242-amino-acid chain: Adenylate kinase 1 (242 aa).

ATP-binding positions include 38–43 and Gly-42; that span reads GSGKGT. The interval 58 to 87 is NMP; the sequence is STGDLLREAAEKKTELGLKIKNIINEGKLV. AMP contacts are provided by residues Thr-59, Arg-64, 85–87, Gly-113, 113–116, and Gln-120; these read KLV and GYPR. The tract at residues 154–191 is LID; that stretch reads GRLIHKPSGRIYHKIFNPPKVPFRDDVTNEPLIQREDD. Arg-155 and Tyr-165 together coordinate ATP. Arg-199 is a binding site for AMP. Residue Ala-229 participates in ATP binding.

Belongs to the adenylate kinase family.

It is found in the cytoplasm. The catalysed reaction is AMP + ATP = 2 ADP. Its activity is regulated as follows. Inhibited by the dinucleoside pentaphosphate compound P1,P5-di(adenosine-5') pentaphosphate (AP5A). Its function is as follows. Catalyzes the reversible transfer of the terminal phosphate group between ATP and AMP. Has very low activity with CTP, GTP, ITP and UTP and no activity with GMP, CMP, UMP or IMP in vitro. The polypeptide is Adenylate kinase 1 (Plasmodium falciparum (isolate 3D7)).